We begin with the raw amino-acid sequence, 212 residues long: MKVTLVHLLFMMLLLLLGLGVGLGLGLHMAAAILENQPLDEFWPSDSQDTAEATEEGQGTRTTEALVLDNKEMAVPVWSEDTVLSEDEVGGSRMLRAKTLLQSKQGYLKFDLNIRDCNVMMAHKIKEHNQSCINDYTFIHEDPSTVGAVCNSPLVDCDLKGGKCHKSPRPFDLTLCKLAKPGQVTPNCHYLTYITEKVIIITCNNTKQLEIK.

Residues 1–24 (MKVTLVHLLFMMLLLLLGLGVGLG) form the signal peptide. 2 N-linked (GlcNAc...) asparagine glycosylation sites follow: Asn129 and Asn204.

It belongs to the pancreatic ribonuclease family. Post-translationally, the N-terminus is blocked. Glycosylated. As to expression, male-specific expression in proximal caput of the epididymis.

Its subcellular location is the secreted. In terms of biological role, secreted proximal epididymal protein required for post-testicular sperm maturation and male fertility. May be involved in sperm adhesion to the egg zona pellucida. Does not have ribonuclease activity. This is Inactive ribonuclease-like protein 10 (Rnase10) from Rattus norvegicus (Rat).